The chain runs to 989 residues: Cation-chloride cotransporter 1 (989 aa).

A compositionally biased stretch (acidic residues) spans 1-10 (MENGEIEGAA). Residues 1-29 (MENGEIEGAADDGVPVPAPPNGRRYRPVG) are disordered. The Cytoplasmic segment spans residues 1–132 (MENGEIEGAA…GRPKETGPKF (132 aa)). The helical transmembrane segment at 133–153 (GTMMGVFVPCLQNILGIIYYI) threads the bilayer. Residues 154-167 (RFTWIVGMAGVWQS) are Extracellular-facing. Residues 168–188 (LVLVSFCGACTFLTGISLSAI) traverse the membrane as a helical segment. Over 189–214 (ATNGAMKGGGPYYLIGRALGPEVGVS) the chain is Cytoplasmic. Residues 215–235 (IGLCFFLGNAVAGSMYVLGAV) form a helical membrane-spanning segment. The Extracellular segment spans residues 236 to 280 (ETFLDAVPSAGFFKESVTVVNNTLVNGTATASTATISTPSLHDLQ). Residues Asn256 and Asn261 are each glycosylated (N-linked (GlcNAc...) asparagine). A helical membrane pass occupies residues 281-301 (VYGVIVTILLCFIVFGGVKII). At 302-304 (NKV) the chain is on the cytoplasmic side. The chain crosses the membrane as a helical span at residues 305 to 325 (APAFLIPVLFSLLCIYLGVFI). Topologically, residues 326–365 (APRHNAPKGITGLSITTFKDNWGSEYQRTNNAGVPDPNGS) are extracellular. A glycan (N-linked (GlcNAc...) asparagine) is linked at Asn363. A helical transmembrane segment spans residues 366–386 (IYWDFNALVGLFFPAVTGIMA). Residues 387 to 405 (GSNRSASLKDTQRSIPIGT) are Cytoplasmic-facing. A helical membrane pass occupies residues 406–426 (LSATLTTTAMYLFSVLLFGAL). Topologically, residues 427 to 441 (ATREELLTDRLLTAT) are extracellular. Residues 442–462 (VAWPAPAVIYIGIILSTLGAA) form a helical membrane-spanning segment. Residues 463 to 498 (LQSLTGAPRLLAAIANDDILPVLNYFKVSEGAEPHS) lie on the Cytoplasmic side of the membrane. The helical transmembrane segment at 499–519 (ATLFTAFICICCVVIGNLDLI) threads the bilayer. The Extracellular portion of the chain corresponds to 520–522 (TPT). The helical transmembrane segment at 523 to 543 (ITMFFLLCYAGVNLSCFLLDL) threads the bilayer. The Cytoplasmic segment spans residues 544–551 (LDAPSWRP). Residues 552–572 (RWKFHHWSLSLVGALLCVVIM) traverse the membrane as a helical segment. The Extracellular segment spans residues 573–578 (FLISWS). A helical membrane pass occupies residues 579-599 (FTVVSLALASLIYYYVSLKGK). At 600-989 (AGDWGDGFKS…YRRDVVTFFT (390 aa)) the chain is on the cytoplasmic side.

It belongs to the SLC12A transporter family. As to expression, expressed in roots, stems and leaves with higher expression in root and leaf tips.

The protein localises to the membrane. Probable cation/chloride cotransporter that may mediate potassium-chloride cotransport. Involved in plant development and K(+) and Cl(-) homeostasis. May not be involved in sodium-chloride cotransport. The polypeptide is Cation-chloride cotransporter 1 (CCC1) (Oryza sativa subsp. japonica (Rice)).